The chain runs to 463 residues: tRNA-2-methylthio-N(6)-dimethylallyladenosine synthase (463 aa).

The MTTase N-terminal domain maps to Gly19–Ser135. The [4Fe-4S] cluster site is built by Cys28, Cys64, Cys98, Cys170, Cys174, and Cys177. The 238-residue stretch at Arg156–Glu393 folds into the Radical SAM core domain. The TRAM domain occupies Gln396–Leu463.

It belongs to the methylthiotransferase family. MiaB subfamily. Monomer. Requires [4Fe-4S] cluster as cofactor.

It localises to the cytoplasm. The catalysed reaction is N(6)-dimethylallyladenosine(37) in tRNA + (sulfur carrier)-SH + AH2 + 2 S-adenosyl-L-methionine = 2-methylsulfanyl-N(6)-dimethylallyladenosine(37) in tRNA + (sulfur carrier)-H + 5'-deoxyadenosine + L-methionine + A + S-adenosyl-L-homocysteine + 2 H(+). Functionally, catalyzes the methylthiolation of N6-(dimethylallyl)adenosine (i(6)A), leading to the formation of 2-methylthio-N6-(dimethylallyl)adenosine (ms(2)i(6)A) at position 37 in tRNAs that read codons beginning with uridine. This chain is tRNA-2-methylthio-N(6)-dimethylallyladenosine synthase, found in Prochlorococcus marinus (strain NATL1A).